Here is an 81-residue protein sequence, read N- to C-terminus: Protease inhibitor 1 (81 aa).

Positions 1-24 are cleaved as a signal peptide; that stretch reads MSSGGLLLLLGLLTLWAELTPVSG. Residues 29–79 enclose the BPTI/Kunitz inhibitor domain; that stretch reads CELPAETGPCKARIRAFYYNPHSHKCLEFTYGGCKGNANNFKTIDECNRTC. Disulfide bonds link Cys29-Cys79, Cys38-Cys62, and Cys54-Cys75.

Expressed by the venom gland.

It localises to the secreted. Functionally, snake venom serine protease inhibitor. The protein is Protease inhibitor 1 of Walterinnesia aegyptia (Desert black snake).